The sequence spans 195 residues: Pyruvoyl-dependent arginine decarboxylase AaxB (195 aa).

Ser-53 bears the Pyruvic acid (Ser) mark.

Belongs to the pyruvoyl-dependent arginine decarboxylase family. As to quaternary structure, trimer of an alpha-beta dimer. The cofactor is pyruvate.

It is found in the cytoplasm. It carries out the reaction L-arginine + H(+) = agmatine + CO2. Its function is as follows. Part of the AaxABC system, catalyzes the decarboxylation of L-arginine. The arginine uptake by the bacterium in the macrophage may be a virulence factor against the host innate immune response. This chain is Pyruvoyl-dependent arginine decarboxylase AaxB (aaxB), found in Chlamydia trachomatis serovar L2 (strain ATCC VR-902B / DSM 19102 / 434/Bu).